The following is a 336-amino-acid chain: Biotin synthase (336 aa).

One can recognise a Radical SAM core domain in the interval 54–281; the sequence is QAIQLSTLLS…KSYVRLSAGR (228 aa). Residues C69, C73, and C76 each coordinate [4Fe-4S] cluster. [2Fe-2S] cluster is bound by residues C113, C144, C204, and R276.

This sequence belongs to the radical SAM superfamily. Biotin synthase family. In terms of assembly, homodimer. [4Fe-4S] cluster is required as a cofactor. It depends on [2Fe-2S] cluster as a cofactor.

The catalysed reaction is (4R,5S)-dethiobiotin + (sulfur carrier)-SH + 2 reduced [2Fe-2S]-[ferredoxin] + 2 S-adenosyl-L-methionine = (sulfur carrier)-H + biotin + 2 5'-deoxyadenosine + 2 L-methionine + 2 oxidized [2Fe-2S]-[ferredoxin]. Its pathway is cofactor biosynthesis; biotin biosynthesis; biotin from 7,8-diaminononanoate: step 2/2. In terms of biological role, catalyzes the conversion of dethiobiotin (DTB) to biotin by the insertion of a sulfur atom into dethiobiotin via a radical-based mechanism. The protein is Biotin synthase of Actinobacillus pleuropneumoniae serotype 7 (strain AP76).